Here is a 399-residue protein sequence, read N- to C-terminus: Acetate kinase (399 aa).

N7 is a binding site for Mg(2+). K14 lines the ATP pocket. R91 provides a ligand contact to substrate. D148 serves as the catalytic Proton donor/acceptor. ATP contacts are provided by residues 208-212 (HLGNG), 283-285 (DFR), and 331-335 (GIGEN). E384 contributes to the Mg(2+) binding site.

It belongs to the acetokinase family. In terms of assembly, homodimer. It depends on Mg(2+) as a cofactor. Requires Mn(2+) as cofactor.

It localises to the cytoplasm. The catalysed reaction is acetate + ATP = acetyl phosphate + ADP. Its pathway is metabolic intermediate biosynthesis; acetyl-CoA biosynthesis; acetyl-CoA from acetate: step 1/2. In terms of biological role, catalyzes the formation of acetyl phosphate from acetate and ATP. Can also catalyze the reverse reaction. In Acetivibrio thermocellus (strain ATCC 27405 / DSM 1237 / JCM 9322 / NBRC 103400 / NCIMB 10682 / NRRL B-4536 / VPI 7372) (Clostridium thermocellum), this protein is Acetate kinase.